The sequence spans 624 residues: Chaperone protein HtpG (624 aa).

The a; substrate-binding stretch occupies residues 1-336 (MSMKGQETRG…SNDLPLNVSR (336 aa)). Residues 337 to 552 (EILQDSRVTQ…ADEMSTQMAK (216 aa)) are b. The segment at 553–624 (LFAAAGQQAP…IRRMNQLLTA (72 aa)) is c.

This sequence belongs to the heat shock protein 90 family. Homodimer.

The protein localises to the cytoplasm. In terms of biological role, molecular chaperone. Has ATPase activity. The polypeptide is Chaperone protein HtpG (Yersinia enterocolitica serotype O:8 / biotype 1B (strain NCTC 13174 / 8081)).